A 296-amino-acid chain; its full sequence is Undecaprenyl-diphosphatase (296 aa).

7 helical membrane passes run 48–68 (SAFTFKIVIQLGSVFAAAWVF), 104–124 (LTLWHVLVGMIPAGILGLLFD), 131–151 (LFSVPTVMIGLLLGAFYMIFA), 167–187 (ITFFQAFVIGLSQAVAMWPGF), 208–228 (SDFTFIMAVPIMLAASLLSLV), 237–257 (SHIPFYIIGFLAAFIFGLLSI), and 272–292 (FAIYRIILVIFIAILYFGFGI).

This sequence belongs to the UppP family.

It localises to the cell membrane. It carries out the reaction di-trans,octa-cis-undecaprenyl diphosphate + H2O = di-trans,octa-cis-undecaprenyl phosphate + phosphate + H(+). Catalyzes the dephosphorylation of undecaprenyl diphosphate (UPP). Confers resistance to bacitracin. This is Undecaprenyl-diphosphatase from Staphylococcus carnosus (strain TM300).